The following is a 459-amino-acid chain: ATP synthase subunit beta (459 aa).

Residue 148–155 coordinates ATP; it reads GGAGVGKT.

This sequence belongs to the ATPase alpha/beta chains family. In terms of assembly, F-type ATPases have 2 components, CF(1) - the catalytic core - and CF(0) - the membrane proton channel. CF(1) has five subunits: alpha(3), beta(3), gamma(1), delta(1), epsilon(1). CF(0) has three main subunits: a(1), b(2) and c(9-12). The alpha and beta chains form an alternating ring which encloses part of the gamma chain. CF(1) is attached to CF(0) by a central stalk formed by the gamma and epsilon chains, while a peripheral stalk is formed by the delta and b chains.

It is found in the cell inner membrane. The catalysed reaction is ATP + H2O + 4 H(+)(in) = ADP + phosphate + 5 H(+)(out). Its function is as follows. Produces ATP from ADP in the presence of a proton gradient across the membrane. The catalytic sites are hosted primarily by the beta subunits. The polypeptide is ATP synthase subunit beta (Thiobacillus denitrificans (strain ATCC 25259 / T1)).